The chain runs to 409 residues: MNVSAIVVEYNPMHNGHLYHIEKTKKLTNCDALVCIMSGNFVQRGFPSILDKWTKANMAISNGVDLVIELPTLYSLSSAEFFSFGAVSILDSLNIINSICFGSEIGNINVLQDIATTLLEEPLEYKILLKNYLDKGISFAKARNLALVELNRDNKIMSENISKILSLSNNILGIEYLKSLLLLNSSIKPFTITREGADYKDENLHEEYSSASSIRKYLKENKNINILKDFLPLEGFLEFKRLITKGYNFSMEDSMINYIRYKYISGYKNLHNLIDVSEGLDNRIYKSLEKSFTYDSLVGEIKSKRYAYSRIGRILCQYFIGFENYDLNSLLKSTPNYMRVLASNERGLKVLKEVKKHSSINIYTKLPKNTNTLLSLDIKATNAYSLLNNNIRFNEDYFRSPTIIKNTIY.

ATP-binding positions include 7–20 (VVEY…HLYH), Gly-102, Asn-169, and Arg-194.

Belongs to the TmcAL family.

The protein resides in the cytoplasm. It catalyses the reaction cytidine(34) in elongator tRNA(Met) + acetate + ATP = N(4)-acetylcytidine(34) in elongator tRNA(Met) + AMP + diphosphate. Catalyzes the formation of N(4)-acetylcytidine (ac(4)C) at the wobble position of elongator tRNA(Met), using acetate and ATP as substrates. First activates an acetate ion to form acetyladenylate (Ac-AMP) and then transfers the acetyl group to tRNA to form ac(4)C34. The sequence is that of tRNA(Met) cytidine acetate ligase from Clostridium botulinum (strain Okra / Type B1).